A 416-amino-acid chain; its full sequence is Phosphoglycerate kinase (416 aa).

Ser-2 carries the post-translational modification N-acetylserine. The (2R)-3-phosphoglycerate site is built by Val-23, Asp-24, Phe-25, Asn-26, Gln-38, Arg-39, Ser-62, His-63, Gly-65, and Arg-66. Lys-82 participates in a covalent cross-link: Glycyl lysine isopeptide (Lys-Gly) (interchain with G-Cter in ubiquitin). Residue Thr-93 is modified to Phosphothreonine. Phosphoserine is present on Ser-110. Residues Leu-121 and Arg-122 each contribute to the (2R)-3-phosphoglycerate site. Ser-130 and Ser-154 each carry phosphoserine. 2 residues coordinate (2R)-3-phosphoglycerate: His-168 and Arg-169. Ser-172 is subject to Phosphoserine. A Glycyl lysine isopeptide (Lys-Gly) (interchain with G-Cter in ubiquitin) cross-link involves residue Lys-197. Phosphothreonine is present on Thr-203. Gly-212 is an ADP binding site. Gly-212 is a CDP binding site. AMP is bound by residues Ala-213 and Lys-214. Positions 213 and 214 each coordinate ATP. Position 213 (Ala-213) interacts with Mg(2+). Residues Ala-216 and Asp-217 each contribute to the Mg(2+) site. Asp-217 contacts CDP. Lys-218 is an AMP binding site. An ATP-binding site is contributed by Lys-218. Gly-236 is an ADP binding site. Gly-236 contributes to the CDP binding site. Residue Gly-237 coordinates AMP. Gly-237 contacts ATP. The residue at position 241 (Thr-241) is a Phosphothreonine. Glycyl lysine isopeptide (Lys-Gly) (interchain with G-Cter in ubiquitin) cross-links involve residues Lys-258 and Lys-274. The residue at position 298 (Thr-298) is a Phosphothreonine. A Glycyl lysine isopeptide (Lys-Gly) (interchain with G-Cter in ubiquitin) cross-link involves residue Lys-302. AMP is bound at residue Gly-311. Residues Gly-311 and Leu-312 each coordinate ATP. Ser-318 is modified (phosphoserine). At Thr-331 the chain carries Phosphothreonine. Asn-335 contributes to the ATP binding site. The CDP site is built by Gly-336 and Phe-341. Phe-341 is a binding site for ADP. Glu-342 contributes to the AMP binding site. Residue Glu-342 coordinates ATP. Residue Gly-371 coordinates (2R)-3-phosphoglycerate. The ATP site is built by Asp-373 and Thr-374. Asp-373 provides a ligand contact to Mg(2+). Residue Thr-392 is modified to Phosphothreonine. Residues Gly-394 and Gly-395 each contribute to the (2R)-3-phosphoglycerate site.

This sequence belongs to the phosphoglycerate kinase family. In terms of assembly, monomer. Mg(2+) is required as a cofactor.

The protein resides in the cytoplasm. The protein localises to the mitochondrion. It catalyses the reaction (2R)-3-phosphoglycerate + ATP = (2R)-3-phospho-glyceroyl phosphate + ADP. Its pathway is carbohydrate degradation; glycolysis; pyruvate from D-glyceraldehyde 3-phosphate: step 2/5. Catalyzes one of the two ATP producing reactions in the glycolytic pathway via the reversible conversion of 1,3-diphosphoglycerate to 3-phosphoglycerate. Both L- and D- forms of purine and pyrimidine nucleotides can be used as substrates, but the activity is much lower on pyrimidines. Negatively regulates the biosynthesis of acetyl-CoA from pyruvate in the mitochondrion. The sequence is that of Phosphoglycerate kinase (PGK1) from Saccharomyces cerevisiae (strain ATCC 204508 / S288c) (Baker's yeast).